Consider the following 481-residue polypeptide: Arf-GAP domain and FG repeat-containing protein 2 (481 aa).

In terms of domain architecture, Arf-GAP spans 27-153; that stretch reads EVWCRRVREL…WYVPPDQVKG (127 aa). The segment at 47–70 adopts a C4-type zinc-finger fold; that stretch reads CFECAQRGVTYVDITVGSFVCTTC. Disordered regions lie at residues 150–220, 271–309, and 431–481; these read QVKG…SVKK, SSVFGSLPPAGQASFQAQPTPAGSSQGTPFGATPLAPAS, and QQNG…NPFL. A compositionally biased stretch (polar residues) spans 157-166; sequence TKGSASTPVQ. Lys-173 carries the post-translational modification N6-acetyllysine. Polar residues-rich tracts occupy residues 188-210, 283-298, and 454-481; these read VAASTSSQPVSQSHARTSQARST, ASFQAQPTPAGSSQGT, and AGISTNPFMTGPSSSPFASKPPTTNPFL.

In terms of assembly, interacts with EPS15R.

The protein is Arf-GAP domain and FG repeat-containing protein 2 (AGFG2) of Homo sapiens (Human).